The sequence spans 250 residues: MTVAAGIGYALVALGPSLSLFVSVISRKPFLILTVLSSTLLWLVSLIILSGLWRPFLPLKANVWWPYALLVITSVCFQEGLRFLFWKVYKRLEDVLDSFADRISRPRLFLTDKLQIALAGGLGHGVAHAVFFCLSLLTPAFGPATFYVERCSKVPFFLISAIIALAFVTIHTFSMVIAFEGYAKGNKVDQIIVPVIHLTAGMLTLVNFASEGCVIGVPLLYLVASLTLVHCGKMVWQRLLESRNQSSASR.

A run of 7 helical transmembrane segments spans residues 5 to 25 (AGIG…VSVI), 29 to 49 (PFLI…LIIL), 57 to 77 (LPLK…SVCF), 116 to 136 (IALA…CLSL), 157 to 177 (FLIS…SMVI), 191 to 211 (IIVP…FASE), and 212 to 232 (GCVI…VHCG).

It belongs to the APH-1 family. In terms of assembly, probable component of the gamma-secretase complex, a complex composed of a presenilin homodimer, nicastrin, APH1 and PEN2.

Its subcellular location is the membrane. Functionally, probable subunit of the gamma-secretase complex, an endoprotease complex that catalyzes the intramembrane cleavage of integral proteins such as Notch receptors. The chain is Gamma-secretase subunit APH1-like from Arabidopsis thaliana (Mouse-ear cress).